The following is a 1014-amino-acid chain: MERGGYRGGRGDGRGRGGRGYGGGGGGGEQGRDRGYGGGEQGRGRGSERGGGNRGQGRGEQQDFRSQSQRGPPPGHGGRGTTQFQQPRPQVAPQPSQAPASYAGSVGGVAGRGAWGRKPQVPSDSASPSTSTTVVSEPVRVAEVMNLKPSVQVATSDRKEPMKRPDRGGVVAVRRVNLYVNHYKVNFNPESVIRHYDVEIKGEIPTKKVSRFELAMVRDKVFTDNPDEFPLAMTAYDGQKNIFSAVELPTGSYKVEYPKTEEMRGRSYTFTIKQVNVLKLGDLKEYMTGRSSFNPRDVLQGMDVVMKEHPSKCMITVGKSFFTRETEPDEDFRFGVIAAKGYRHTLKPTAQGLSLCLDYSVLAFRKAMSVIEYLKLYFNWSDMRQFRRRDVEEELIGLKVTVNHRKNKQKLTIVGLSMQNTKDIKFDLIDQEGNEPPRKTSIVEYFRIKYGRHIVHKDIPCLDLGKNGRQNFVPMEFCDLVEGQIYPKDNLDKDSALWLKKLSLVNPQQRQRNIDKMIKARNGPSGGEIIGNFGLKVDTNMTPVEGRVLKAPSLKLAERGRVVREEPNPRQNNQWNLMKKGVTRGSIVKHWAVLDFTASERFNKMPNDFVDNLIDRCWRLGMQMEAPIVYKTSRMETLSNGNAIEELLRSVIDEASRKHGGARPTLVLCAMSRKDDGYKTLKWIAETKLGLVTQCFLTGPATKGGDQYRANLALKMNAKVGGSNVELMDTFSFFKKEDEVMFIGADVNHPAARDKMSPSIVAVVGTLNWPEANRYAARVIAQPHRKEEIQGFGDACLELVKAHVQATGKRPNKIVIFRDGVSDAQFDMVLNVELLDVKLTFEKNGYNPKITVIVAQKRHQTRFFPATNNDGSDKGNVPSGTVVDTKVIHPYEYDFYLCSHHGGIGTSKPTHYYTLWDELGFTSDQVQKLIFEMCFTFTRCTKPVSLVPPVYYADMVAFRGRMYHEASSREKNFKQPRGASTSAASLASSLSSLTIEDKAIFKLHAELENVMFFV.

A compositionally biased stretch (basic and acidic residues) spans methionine 1–glycine 15. The segment at methionine 1 to glutamate 137 is disordered. Gly residues-rich tracts occupy residues glycine 18–glutamate 29 and arginine 49–arginine 58. The segment covering glutamine 83–glycine 104 has biased composition (low complexity). A compositionally biased stretch (gly residues) spans serine 105–alanine 114. Residues valine 121–glutamate 137 show a composition bias toward low complexity. A PAZ domain is found at serine 369–glutamate 482. The Piwi domain occupies leucine 666–glutamate 965. 3 interaction with guide RNA regions span residues lysine 857 to arginine 858, histidine 900 to lysine 908, and phenylalanine 937 to arginine 959.

This sequence belongs to the argonaute family. Ago subfamily. In terms of assembly, interacts with NERD.

Involved in RNA-mediated post-transcriptional gene silencing (PTGS). Main component of the RNA-induced silencing complex (RISC) that binds to a short guide RNA such as microRNA (miRNA) or small interfering RNA (siRNA). RISC uses the mature miRNA or siRNA as a guide for slicer-directed cleavage of homologous mRNAs to repress gene expression. Associates mainly with siRNAs of 21 nucleotide in length and preferentially recruits small RNAs with a 5' terminal adenosine. Probably involved in antiviral RNA silencing. Associates with siRNA derived from cucumber mosaic virus (CMV). Targeted by turnip yellows virus (TuYV) protein P0 (via F-box-like domain) for probable proteasome degradation and thereby inactivating AGO2 function in RNA silencing. Required to direct NERD-dependent DNA methylation and silencing. The polypeptide is Protein argonaute 2 (AGO2) (Arabidopsis thaliana (Mouse-ear cress)).